We begin with the raw amino-acid sequence, 234 residues long: Leucyl/phenylalanyl-tRNA--protein transferase (234 aa).

This sequence belongs to the L/F-transferase family.

It is found in the cytoplasm. The catalysed reaction is N-terminal L-lysyl-[protein] + L-leucyl-tRNA(Leu) = N-terminal L-leucyl-L-lysyl-[protein] + tRNA(Leu) + H(+). It carries out the reaction N-terminal L-arginyl-[protein] + L-leucyl-tRNA(Leu) = N-terminal L-leucyl-L-arginyl-[protein] + tRNA(Leu) + H(+). The enzyme catalyses L-phenylalanyl-tRNA(Phe) + an N-terminal L-alpha-aminoacyl-[protein] = an N-terminal L-phenylalanyl-L-alpha-aminoacyl-[protein] + tRNA(Phe). Functions in the N-end rule pathway of protein degradation where it conjugates Leu, Phe and, less efficiently, Met from aminoacyl-tRNAs to the N-termini of proteins containing an N-terminal arginine or lysine. The sequence is that of Leucyl/phenylalanyl-tRNA--protein transferase from Salmonella gallinarum (strain 287/91 / NCTC 13346).